Reading from the N-terminus, the 290-residue chain is Multiple sugar-binding transport system permease protein MsmF (290 aa).

Transmembrane regions (helical) follow at residues 12-32 (GWTF…FPMF), 72-92 (FTLV…IIIA), 104-124 (FFRA…SLIF), 156-176 (VIAS…ILFL), 201-221 (FWSV…IMAL), 231-253 (IFAL…VYNY), and 260-280 (YGYA…VSVL). One can recognise an ABC transmembrane type-1 domain in the interval 70–281 (IGFTLVLTLA…IIIGIVSVLQ (212 aa)).

It belongs to the binding-protein-dependent transport system permease family. MalFG subfamily.

It localises to the cell membrane. Its function is as follows. Involved in a binding protein-dependent transport system responsible for the uptake of melibiose, raffinose and isomaltotriose. This chain is Multiple sugar-binding transport system permease protein MsmF (msmF), found in Streptococcus mutans serotype c (strain ATCC 700610 / UA159).